The chain runs to 626 residues: Phosphomethylpyrimidine synthase (626 aa).

The segment at 1 to 22 (MTKQEKAINLSESAQVDQQSVQ) is disordered. The span at 10–22 (LSESAQVDQQSVQ) shows a compositional bias: polar residues. Residues N232, M261, Y290, H326, 346–348 (SRG), 387–390 (DGLR), and E426 contribute to the substrate site. H430 lines the Zn(2+) pocket. Y453 contributes to the substrate binding site. H494 serves as a coordination point for Zn(2+). [4Fe-4S] cluster-binding residues include C574, C577, and C582.

The protein belongs to the ThiC family. In terms of assembly, homodimer. It depends on [4Fe-4S] cluster as a cofactor.

It carries out the reaction 5-amino-1-(5-phospho-beta-D-ribosyl)imidazole + S-adenosyl-L-methionine = 4-amino-2-methyl-5-(phosphooxymethyl)pyrimidine + CO + 5'-deoxyadenosine + formate + L-methionine + 3 H(+). Its pathway is cofactor biosynthesis; thiamine diphosphate biosynthesis. In terms of biological role, catalyzes the synthesis of the hydroxymethylpyrimidine phosphate (HMP-P) moiety of thiamine from aminoimidazole ribotide (AIR) in a radical S-adenosyl-L-methionine (SAM)-dependent reaction. The protein is Phosphomethylpyrimidine synthase of Pseudomonas putida (strain GB-1).